Consider the following 87-residue polypeptide: Small ribosomal subunit protein bS20 (87 aa).

Positions 1-26 (MANIKSAKKRAIQAEKARKHNASRRS) are disordered.

The protein belongs to the bacterial ribosomal protein bS20 family.

In terms of biological role, binds directly to 16S ribosomal RNA. In Tolumonas auensis (strain DSM 9187 / NBRC 110442 / TA 4), this protein is Small ribosomal subunit protein bS20.